The following is a 651-amino-acid chain: Translation factor GUF1 homolog, mitochondrial (651 aa).

The transit peptide at 1-26 (MAVTRAAAPMVGNCSSAMLIIGRRYF) directs the protein to the mitochondrion. Positions 51-228 (KKIRNFGIVA…AVVERLPPPK (178 aa)) constitute a tr-type G domain. GTP is bound by residues 60–67 (AHVDHGKS), 121–125 (DTPGH), and 175–178 (NKVD).

It belongs to the TRAFAC class translation factor GTPase superfamily. Classic translation factor GTPase family. LepA subfamily.

Its subcellular location is the mitochondrion inner membrane. It catalyses the reaction GTP + H2O = GDP + phosphate + H(+). Promotes mitochondrial protein synthesis. May act as a fidelity factor of the translation reaction, by catalyzing a one-codon backward translocation of tRNAs on improperly translocated ribosomes. Binds to mitochondrial ribosomes in a GTP-dependent manner. The polypeptide is Translation factor GUF1 homolog, mitochondrial (Brugia malayi (Filarial nematode worm)).